We begin with the raw amino-acid sequence, 946 residues long: Multiple C2 and transmembrane domain-containing protein 1 (946 aa).

2 disordered regions span residues 28 to 193 (QLGV…QKSS) and 205 to 229 (LEPA…KGEE). The span at 31–43 (VGKGKGGGGGRAG) shows a compositional bias: gly residues. The span at 87 to 96 (FSSSQPNLCC) shows a compositional bias: polar residues. Residues 143-163 (PGGRSPDSAPSSSASSSLSSS) are compositionally biased toward low complexity. Residues 169–187 (RGDRIRDEGTRRGSPEAHL) show a composition bias toward basic and acidic residues. 3 C2 domains span residues 235–353 (KINP…DVTL), 399–516 (QTQS…KLEL), and 550–671 (HKER…AYVL). Residues aspartate 270, aspartate 276, aspartate 323, aspartate 325, aspartate 331, aspartate 433, aspartate 439, aspartate 486, aspartate 488, aspartate 494, aspartate 589, aspartate 595, aspartate 641, aspartate 643, and aspartate 649 each coordinate Ca(2+). The next 2 membrane-spanning stretches (helical) occupy residues 758-778 (FVLF…LLLL) and 861-881 (PFLS…LYFI).

The protein belongs to the MCTP family. Ca(2+) serves as cofactor. Expressed in the brain and central nervous system (at protein level). Isoform 1 and isoform 2 are expressed in the brain, kidney, liver, heart, lung, skeletal muscle, testis and spleen. Isoform 2 shows a higher expression in the brain, heart and skeletal muscle.

It localises to the cytoplasmic vesicle. The protein resides in the secretory vesicle. Its subcellular location is the synaptic vesicle membrane. It is found in the recycling endosome. The protein localises to the endoplasmic reticulum membrane. In terms of biological role, calcium sensor which is essential for the stabilization of normal baseline neurotransmitter release and for the induction and long-term maintenance of presynaptic homeostatic plasticity. Overexpression in cultured neurons significantly inhibits neuronal transferrin endocytosis, secretory vesicle retrieval, cell migration, and oxidative stress from glutamate toxicity. This is Multiple C2 and transmembrane domain-containing protein 1 from Rattus norvegicus (Rat).